Consider the following 196-residue polypeptide: DnaA initiator-associating protein DiaA (196 aa).

The SIS domain occupies 34–196 (LVQSLLNGNK…DNTLFPHQAD (163 aa)).

This sequence belongs to the SIS family. DiaA subfamily. Homotetramer; dimer of dimers.

Required for the timely initiation of chromosomal replication via direct interactions with the DnaA initiator protein. This is DnaA initiator-associating protein DiaA from Edwardsiella ictaluri (strain 93-146).